We begin with the raw amino-acid sequence, 79 residues long: Small ribosomal subunit protein uS17 (79 aa).

This sequence belongs to the universal ribosomal protein uS17 family. In terms of assembly, part of the 30S ribosomal subunit.

Functionally, one of the primary rRNA binding proteins, it binds specifically to the 5'-end of 16S ribosomal RNA. This chain is Small ribosomal subunit protein uS17, found in Caulobacter sp. (strain K31).